Consider the following 92-residue polypeptide: Small ribosomal subunit protein uS19 (92 aa).

Belongs to the universal ribosomal protein uS19 family.

Its function is as follows. Protein S19 forms a complex with S13 that binds strongly to the 16S ribosomal RNA. The sequence is that of Small ribosomal subunit protein uS19 from Prochlorococcus marinus (strain MIT 9312).